The chain runs to 329 residues: RING finger protein 225 (329 aa).

Residues 1-55 are disordered; the sequence is MPCPRPFWLRHSRAPQGSGPSSPGSLSAPRSPSRGEDQEEEEEEEGDGSPGSGPI. Low complexity predominate over residues 14-32; it reads APQGSGPSSPGSLSAPRSP. Positions 37–47 are enriched in acidic residues; that stretch reads DQEEEEEEEGD. Residues 64 to 112 form an RING-type zinc finger; the sequence is CLICVSSFDGVFKLPKRLDCGHVFCLECLARLSLATAGGGNAVACPVCR. Positions 122-181 are disordered; it reads GLPALPTQSGLLPRDARAPPSRQGSVRFDRRRGLLYLRPPPPPPGPRKARAPPPPPPLRL. The segment covering 159–179 has biased composition (pro residues); sequence RPPPPPPGPRKARAPPPPPPL. The chain crosses the membrane as a helical span at residues 203-223; sequence ALAVLVAAGLVVSGVYIFFLI. A disordered region spans residues 248–329; that stretch reads FPPRPPPGSP…RGARRLWGSQ (82 aa). Over residues 281-293 the composition is skewed to acidic residues; it reads DALEPEAGPEDPA. Residues 294–304 show a composition bias toward basic and acidic residues; that stretch reads EAERTLDRRSD.

It is found in the membrane. The chain is RING finger protein 225 from Homo sapiens (Human).